The primary structure comprises 475 residues: MSPQTETKTGVGFKAGVKDYRLTYYTPEYETKETDILAAFRMTPQPGVPPEEAGAAVAAESSTGTWTTVWTDGLTSLDRYKGRCYDIEPVAGEENQYIAYVAHPLDLFEEGSVTNLFTSIVGNVFGFKASRALRLEDLRIPPSYVKTFQGPPHGIQVERDKLNKYGRPLLGCTIKPKLGLSAKNYGRAVYECLRGGLDFTKDDENVNSQPFMRWRDRFLFVAEALFKSQAETGEIKGHYLNATAGTSEEMMKRAACARELGVPIVMHDYLTGGFTANTSLAHHCRDNGLLLHIHRAMHAVIDRQKNHGMHFRVSAKALRLSGGDHIHAGTVVGKLEGERDVTLGFVDLLRDDYIEKDRSRGVYFTQDWVSLPGVLPVASGGIHVWHMPALTEIFGDDSVLQFGGGTLGHPWGNAPGAVANRVASEACVQARNEGRDLAREGNEIIREAAKWSPDLAAACEVWKEIKFEYETMNTL.

A propeptide spanning residues 1-2 is cleaved from the precursor; it reads MS. Pro-3 is subject to N-acetylproline. Position 14 is an N6,N6,N6-trimethyllysine (Lys-14). Substrate-binding residues include Asn-123 and Thr-173. The active-site Proton acceptor is the Lys-175. Lys-177 lines the substrate pocket. Residues Lys-201, Asp-203, and Glu-204 each coordinate Mg(2+). Lys-201 carries the post-translational modification N6-carboxylysine. The active-site Proton acceptor is His-294. Positions 295, 327, and 379 each coordinate substrate.

The protein belongs to the RuBisCO large chain family. Type I subfamily. As to quaternary structure, heterohexadecamer of 8 large chains and 8 small chains. Mg(2+) is required as a cofactor.

It is found in the plastid. Its subcellular location is the chloroplast. The catalysed reaction is 2 (2R)-3-phosphoglycerate + 2 H(+) = D-ribulose 1,5-bisphosphate + CO2 + H2O. The enzyme catalyses D-ribulose 1,5-bisphosphate + O2 = 2-phosphoglycolate + (2R)-3-phosphoglycerate + 2 H(+). In terms of biological role, ruBisCO catalyzes two reactions: the carboxylation of D-ribulose 1,5-bisphosphate, the primary event in carbon dioxide fixation, as well as the oxidative fragmentation of the pentose substrate in the photorespiration process. Both reactions occur simultaneously and in competition at the same active site. This Bazzania trilobata (Greater whipwort) protein is Ribulose bisphosphate carboxylase large chain.